The following is a 283-amino-acid chain: Homeobox protein six1a (283 aa).

A DNA-binding region (homeobox) is located at residues 124–183 (GEETSYCFKEKSRSVLREWYTHNPYPSPREKRELAEATGLTTTQVSNWFKNRRQRDRAAE). The interval 168-264 (VSNWFKNRRQ…PLHGMQGHPH (97 aa)) is disordered. Over residues 179-190 (DRAAEAKERENG) the composition is skewed to basic and acidic residues. Residues 237–248 (MNNPAAPAYPMP) are compositionally biased toward low complexity.

Belongs to the SIX/Sine oculis homeobox family.

It localises to the nucleus. It is found in the cytoplasm. Its function is as follows. Transcription factor that is involved in the regulation of cell proliferation, apoptosis and embryonic development. Depending on context, functions as a transcriptional repressor or activator. Plays an important role in the development of the inner ear, where it promotes hair cell proliferation and inhibits proliferation of neural progenitor cells. Required for normal myogenesis. Plays a role in the development of fast muscle fibers throughout the body, as well as the development of craniofacial muscles. The chain is Homeobox protein six1a (six1a) from Danio rerio (Zebrafish).